A 137-amino-acid chain; its full sequence is Methylmalonyl-CoA decarboxylase subunit delta (137 aa).

Residues 30–50 (VTVVLGMGITVVALIFLMYII) form a helical membrane-spanning segment.

It belongs to the OadG family. In terms of assembly, the methylmalonyl-CoA decarboxylase is composed of four subunits: the carboxyltransferase alpha subunit (MmdA), the tunnel beta subunit (MmdB), the biotin-containing gamma subunit (MmdC) and the delta subunit (MmdD).

It localises to the cell membrane. The enzyme catalyses (S)-methylmalonyl-CoA + Na(+)(in) + H(+)(out) = propanoyl-CoA + Na(+)(out) + CO2. Its function is as follows. Subunit of the sodium ion pump methylmalonyl-CoA decarboxylase, which converts the chemical energy of a decarboxylation reaction into an electrochemical gradient of Na(+) ions across the cytoplasmic membrane, thereby creating a sodium ion motive force that is used for ATP synthesis. The delta subunit is required for catalytic activity as well as for the proper assembly of the individual subunits to an enzyme complex. In Propionigenium modestum, this protein is Methylmalonyl-CoA decarboxylase subunit delta.